The following is a 191-amino-acid chain: Small ribosomal subunit protein uS5 (191 aa).

Residues 21 to 84 form the S5 DRBM domain; it reads LVDKLVTINR…ERAKRTMIRV (64 aa). A disordered region spans residues 161 to 191; the sequence is PRHVASRRGKKAAELFGKREQGQTEAEVTNG. Residues 171–182 are compositionally biased toward basic and acidic residues; the sequence is KAAELFGKREQG.

The protein belongs to the universal ribosomal protein uS5 family. Part of the 30S ribosomal subunit. Contacts proteins S4 and S8.

With S4 and S12 plays an important role in translational accuracy. Functionally, located at the back of the 30S subunit body where it stabilizes the conformation of the head with respect to the body. The chain is Small ribosomal subunit protein uS5 from Gluconobacter oxydans (strain 621H) (Gluconobacter suboxydans).